Reading from the N-terminus, the 200-residue chain is MPIGTPSVPYRLPGSQMERWVDIYTRLGVERILFLGSEVNDGIANSLVAQMLYLDSEDSSKPIYLYINSPGGSVTAGLAIYDTIQYVKSEVVTICVGLAASMGAFLLAAGTKGKRVALPHSRIMIHQPLGGTSRRQASDIEIEAREILRMKDMLNHSLADMSGQTFEKIEKDTDRDYFLSAEEAMAYGLIDRVISHPTEA.

Catalysis depends on Ser-101, which acts as the Nucleophile. His-126 is an active-site residue.

The protein belongs to the peptidase S14 family. Fourteen ClpP subunits assemble into 2 heptameric rings which stack back to back to give a disk-like structure with a central cavity, resembling the structure of eukaryotic proteasomes.

The protein resides in the cytoplasm. It catalyses the reaction Hydrolysis of proteins to small peptides in the presence of ATP and magnesium. alpha-casein is the usual test substrate. In the absence of ATP, only oligopeptides shorter than five residues are hydrolyzed (such as succinyl-Leu-Tyr-|-NHMec, and Leu-Tyr-Leu-|-Tyr-Trp, in which cleavage of the -Tyr-|-Leu- and -Tyr-|-Trp bonds also occurs).. In terms of biological role, cleaves peptides in various proteins in a process that requires ATP hydrolysis. Has a chymotrypsin-like activity. Plays a major role in the degradation of misfolded proteins. The polypeptide is ATP-dependent Clp protease proteolytic subunit 3 (Synechococcus sp. (strain CC9902)).